The following is a 314-amino-acid chain: Transcription factor TCP20 (314 aa).

Disordered stretches follow at residues 1 to 91 (MDPK…RGRR) and 295 to 314 (NHEE…GSGR). Basic and acidic residues-rich tracts occupy residues 38–49 (DENRKPTTEIKD) and 77–89 (SNKD…EGRG). The region spanning 78–132 (NKDRHTKVEGRGRRIRMPALCAARIFQLTRELGHKSDGETIQWLLQQAEPSIIAA) is the TCP domain.

As to quaternary structure, interacts with PURA1. Interacts with SPL.

It is found in the nucleus. In terms of biological role, transcription factor that binds to the site II motif (3'-TGGGCC/T-5') in the promoter of PCNA-2 and to 3'-GCCCG/A-5' elements in the promoters of cyclin CYCB1-1 and ribosomal protein genes. This Arabidopsis thaliana (Mouse-ear cress) protein is Transcription factor TCP20 (TCP20).